We begin with the raw amino-acid sequence, 220 residues long: Deoxyribose-phosphate aldolase (220 aa).

Asp-89 functions as the Proton donor/acceptor in the catalytic mechanism. Lys-151 functions as the Schiff-base intermediate with acetaldehyde in the catalytic mechanism. The active-site Proton donor/acceptor is Lys-180.

It belongs to the DeoC/FbaB aldolase family. DeoC type 1 subfamily.

The protein localises to the cytoplasm. It carries out the reaction 2-deoxy-D-ribose 5-phosphate = D-glyceraldehyde 3-phosphate + acetaldehyde. It participates in carbohydrate degradation; 2-deoxy-D-ribose 1-phosphate degradation; D-glyceraldehyde 3-phosphate and acetaldehyde from 2-deoxy-alpha-D-ribose 1-phosphate: step 2/2. Its function is as follows. Catalyzes a reversible aldol reaction between acetaldehyde and D-glyceraldehyde 3-phosphate to generate 2-deoxy-D-ribose 5-phosphate. The chain is Deoxyribose-phosphate aldolase from Staphylococcus saprophyticus subsp. saprophyticus (strain ATCC 15305 / DSM 20229 / NCIMB 8711 / NCTC 7292 / S-41).